We begin with the raw amino-acid sequence, 190 residues long: Guanylate kinase (190 aa).

Positions 8–186 (ARPTVLTGPS…ALAELEKQMN (179 aa)) constitute a Guanylate kinase-like domain. Residue 15-22 (GPSGVGKG) coordinates ATP.

This sequence belongs to the guanylate kinase family.

It localises to the cytoplasm. The enzyme catalyses GMP + ATP = GDP + ADP. The catalysed reaction is dZMP + ATP = dZDP + ADP. Its pathway is purine metabolism. Essential for recycling GMP and indirectly, cGMP. Its function is as follows. (Microbial infection) Catalyzes the phosphorylation of dZMP to dZDP, when the bacterium is infected by a phage that produces the substrate for the synthesis of dZTP (2- amino-2'-deoxyadenosine 5'-triphosphate), which is then used by the phage as a DNA polymerase substrate. In Synechococcus sp. (strain CC9311), this protein is Guanylate kinase.